Reading from the N-terminus, the 251-residue chain is Flap endonuclease Xni (251 aa).

Mg(2+) is bound at residue D104. The region spanning 160–249 (VLPRQLPDYW…IDGNLQQLRL (90 aa)) is the 5'-3' exonuclease domain. 5 residues coordinate K(+): L171, A172, P180, V182, and I185. The interaction with DNA stretch occupies residues 184-189 (GIGPKS).

It belongs to the Xni family. Mg(2+) serves as cofactor. Requires K(+) as cofactor.

Its function is as follows. Has flap endonuclease activity. During DNA replication, flap endonucleases cleave the 5'-overhanging flap structure that is generated by displacement synthesis when DNA polymerase encounters the 5'-end of a downstream Okazaki fragment. In Salmonella schwarzengrund (strain CVM19633), this protein is Flap endonuclease Xni.